The sequence spans 190 residues: Pyridoxal 5'-phosphate synthase subunit PdxT (190 aa).

46–48 (GES) serves as a coordination point for L-glutamine. The active-site Nucleophile is Cys-78. L-glutamine contacts are provided by residues Arg-105 and 134–135 (IR). Catalysis depends on charge relay system residues His-170 and Glu-172.

It belongs to the glutaminase PdxT/SNO family. In terms of assembly, in the presence of PdxS, forms a dodecamer of heterodimers. Only shows activity in the heterodimer.

It catalyses the reaction aldehydo-D-ribose 5-phosphate + D-glyceraldehyde 3-phosphate + L-glutamine = pyridoxal 5'-phosphate + L-glutamate + phosphate + 3 H2O + H(+). It carries out the reaction L-glutamine + H2O = L-glutamate + NH4(+). Its pathway is cofactor biosynthesis; pyridoxal 5'-phosphate biosynthesis. In terms of biological role, catalyzes the hydrolysis of glutamine to glutamate and ammonia as part of the biosynthesis of pyridoxal 5'-phosphate. The resulting ammonia molecule is channeled to the active site of PdxS. The sequence is that of Pyridoxal 5'-phosphate synthase subunit PdxT from Clostridium beijerinckii (strain ATCC 51743 / NCIMB 8052) (Clostridium acetobutylicum).